We begin with the raw amino-acid sequence, 224 residues long: Ribonuclease HII (224 aa).

Residues 1 to 210 enclose the RNase H type-2 domain; that stretch reads MKIGGIDEAG…VRKIEESIKA (210 aa). Residues D7, E8, and D105 each coordinate a divalent metal cation.

The protein belongs to the RNase HII family. Mn(2+) is required as a cofactor. Mg(2+) serves as cofactor.

The protein resides in the cytoplasm. The catalysed reaction is Endonucleolytic cleavage to 5'-phosphomonoester.. Its function is as follows. Endonuclease that specifically degrades the RNA of RNA-DNA hybrids. This chain is Ribonuclease HII, found in Pyrococcus furiosus (strain ATCC 43587 / DSM 3638 / JCM 8422 / Vc1).